Here is a 212-residue protein sequence, read N- to C-terminus: Imidazole glycerol phosphate synthase subunit HisH (212 aa).

Residues 1-211 (MIGVIDYGMG…TKMAAEQQVK (211 aa)) form the Glutamine amidotransferase type-1 domain. Cys79 serves as the catalytic Nucleophile. Catalysis depends on residues His186 and Glu188.

Heterodimer of HisH and HisF.

The protein resides in the cytoplasm. It catalyses the reaction 5-[(5-phospho-1-deoxy-D-ribulos-1-ylimino)methylamino]-1-(5-phospho-beta-D-ribosyl)imidazole-4-carboxamide + L-glutamine = D-erythro-1-(imidazol-4-yl)glycerol 3-phosphate + 5-amino-1-(5-phospho-beta-D-ribosyl)imidazole-4-carboxamide + L-glutamate + H(+). It carries out the reaction L-glutamine + H2O = L-glutamate + NH4(+). It functions in the pathway amino-acid biosynthesis; L-histidine biosynthesis; L-histidine from 5-phospho-alpha-D-ribose 1-diphosphate: step 5/9. Its function is as follows. IGPS catalyzes the conversion of PRFAR and glutamine to IGP, AICAR and glutamate. The HisH subunit catalyzes the hydrolysis of glutamine to glutamate and ammonia as part of the synthesis of IGP and AICAR. The resulting ammonia molecule is channeled to the active site of HisF. In Bacillus velezensis (strain DSM 23117 / BGSC 10A6 / LMG 26770 / FZB42) (Bacillus amyloliquefaciens subsp. plantarum), this protein is Imidazole glycerol phosphate synthase subunit HisH.